The primary structure comprises 104 residues: MALKLRRNDEIIILTGKDKGKKGIIKNILSSNKAIVNGLNLVKKHQKPLPSQNKNGGILEKEAPIQISNIAIFNPELKKADRIGFRFEEGKKVRFFKSNKKTIK.

Belongs to the universal ribosomal protein uL24 family. As to quaternary structure, part of the 50S ribosomal subunit.

Functionally, one of two assembly initiator proteins, it binds directly to the 5'-end of the 23S rRNA, where it nucleates assembly of the 50S subunit. Its function is as follows. One of the proteins that surrounds the polypeptide exit tunnel on the outside of the subunit. In Buchnera aphidicola subsp. Schizaphis graminum (strain Sg), this protein is Large ribosomal subunit protein uL24.